A 965-amino-acid polypeptide reads, in one-letter code: Aminopeptidase N (965 aa).

Residues 1–8 are Cytoplasmic-facing; sequence MAKGFYIS. Residues 9–32 form a helical; Signal-anchor for type II membrane protein membrane-spanning segment; it reads KALGILAILLGVAAVATIIALSVV. The segment at 33–65 is cytosolic Ser/Thr-rich junction; the sequence is YAQEKNKNAERGTAAPTSPTGPTTTSATTLDQS. Over 33-965 the chain is Extracellular; sequence YAQEKNKNAE…VVLNWFKDHS (933 aa). Residues 40–65 form a disordered region; that stretch reads NAERGTAAPTSPTGPTTTSATTLDQS. Positions 44-61 are enriched in low complexity; the sequence is GTAAPTSPTGPTTTSATT. The tract at residues 66–965 is metalloprotease; that stretch reads KPWNRYRLPT…VVLNWFKDHS (900 aa). A glycan (N-linked (GlcNAc...) asparagine) is linked at asparagine 125. At tyrosine 173 the chain carries Sulfotyrosine. Asparagine 231, asparagine 260, and asparagine 316 each carry an N-linked (GlcNAc...) asparagine glycan. 349–353 is a binding site for substrate; the sequence is GAMEN. Histidine 385 serves as a coordination point for Zn(2+). The Proton acceptor role is filled by glutamate 386. Residues histidine 389 and glutamate 408 each coordinate Zn(2+). At tyrosine 416 the chain carries Sulfotyrosine. 6 N-linked (GlcNAc...) asparagine glycosylation sites follow: asparagine 508, asparagine 569, asparagine 624, asparagine 680, asparagine 734, and asparagine 738. 2 disulfides stabilise this stretch: cysteine 760/cysteine 767 and cysteine 797/cysteine 833.

The protein belongs to the peptidase M1 family. Homodimer. Interacts with SLC6A19. Zn(2+) is required as a cofactor. In terms of processing, sulfated. N- and O-glycosylated. Post-translationally, may undergo proteolysis and give rise to a soluble form.

The protein resides in the cell membrane. It carries out the reaction Release of an N-terminal amino acid, Xaa-|-Yaa- from a peptide, amide or arylamide. Xaa is preferably Ala, but may be most amino acids including Pro (slow action). When a terminal hydrophobic residue is followed by a prolyl residue, the two may be released as an intact Xaa-Pro dipeptide.. Broad specificity aminopeptidase which plays a role in the final digestion of peptides generated from hydrolysis of proteins by gastric and pancreatic proteases. Also involved in the processing of various peptides including peptide hormones, such as angiotensin III and IV, neuropeptides, and chemokines. May also be involved the cleavage of peptides bound to major histocompatibility complex class II molecules of antigen presenting cells. May have a role in angiogenesis and promote cholesterol crystallization. May have a role in amino acid transport by acting as binding partner of amino acid transporter SLC6A19 and regulating its activity. The sequence is that of Aminopeptidase N (ANPEP) from Bos taurus (Bovine).